The chain runs to 70 residues: Alpha-toxin Bot9 (70 aa).

Residues 6–69 (RDGYIVYPNN…PIKDPSYKCY (64 aa)) form the LCN-type CS-alpha/beta domain. 4 disulfides stabilise this stretch: C16–C68, C20–C40, C26–C50, and C30–C52.

The protein belongs to the long (4 C-C) scorpion toxin superfamily. Sodium channel inhibitor family. Alpha subfamily. As to expression, expressed by the venom gland.

Its subcellular location is the secreted. Its function is as follows. Alpha toxins bind voltage-independently at site-3 of sodium channels (Nav) and inhibit the inactivation of the activated channels, thereby blocking neuronal transmission. This toxin is active against rat Nav1.2/SCN2A and B.germanica Nav1. This is Alpha-toxin Bot9 from Buthus occitanus tunetanus (Common European scorpion).